The chain runs to 585 residues: Protein cereblon (585 aa).

Disordered regions lie at residues 1–109 and 156–195; these read MDEE…DLES and FSQERRRSRTSEETSQEAAEQPVDPPPQQPPRPPIDIGFD. Residues 80–95 show a composition bias toward polar residues; the sequence is QDDTASEGSHPSSDMS. Positions 158–167 are enriched in basic and acidic residues; that stretch reads QERRRSRTSE. Residues 178-189 are compositionally biased toward pro residues; that stretch reads VDPPPQQPPRPP. A Lon N-terminal domain is found at 225-451; sequence HMLIFLHQHI…LIKSTFKDET (227 aa). Residues 450 to 559 form the CULT domain; that stretch reads ETLFFCRYCN…LAGSSVRIGK (110 aa). Cys-455, Cys-458, Cys-524, and Cys-527 together coordinate Zn(2+).

It belongs to the CRBN family. In terms of assembly, likely a component of a DCX (DDB1-CUL4-X-box) protein ligase complex. May interact with pic/DDB1. Post-translationally, ubiquitinated. Expressed in the fat body (at protein level).

It localises to the nucleus. Its pathway is protein modification; protein ubiquitination. Functionally, substrate recognition component of a DCX (DDB1-CUL4-X-box) E3 protein ligase complex that mediates the ubiquitination and subsequent proteasomal degradation of target proteins. Has an essential role in mediating growth by negatively regulating insulin signaling. It also has a role in maintaining presynaptic function in the neuromuscular junction synapses of third-instar larvae. In Drosophila melanogaster (Fruit fly), this protein is Protein cereblon.